Reading from the N-terminus, the 413-residue chain is Argininosuccinate synthase (413 aa).

Residue A22 to S30 participates in ATP binding. L-citrulline-binding residues include Y100 and S105. G130 is a binding site for ATP. L-aspartate is bound by residues T132, N136, and D137. N136 contributes to the L-citrulline binding site. The L-citrulline site is built by R140, S189, S198, E274, and Y286.

It belongs to the argininosuccinate synthase family. Type 1 subfamily. In terms of assembly, homotetramer.

The protein resides in the cytoplasm. The catalysed reaction is L-citrulline + L-aspartate + ATP = 2-(N(omega)-L-arginino)succinate + AMP + diphosphate + H(+). Its pathway is amino-acid biosynthesis; L-arginine biosynthesis; L-arginine from L-ornithine and carbamoyl phosphate: step 2/3. The protein is Argininosuccinate synthase of Endomicrobium trichonymphae.